Consider the following 117-residue polypeptide: Ribonuclease P protein component (117 aa).

It belongs to the RnpA family. As to quaternary structure, consists of a catalytic RNA component (M1 or rnpB) and a protein subunit.

It carries out the reaction Endonucleolytic cleavage of RNA, removing 5'-extranucleotides from tRNA precursor.. Its function is as follows. RNaseP catalyzes the removal of the 5'-leader sequence from pre-tRNA to produce the mature 5'-terminus. It can also cleave other RNA substrates such as 4.5S RNA. The protein component plays an auxiliary but essential role in vivo by binding to the 5'-leader sequence and broadening the substrate specificity of the ribozyme. This chain is Ribonuclease P protein component, found in Staphylococcus aureus (strain MW2).